The chain runs to 302 residues: ICOS ligand (302 aa).

Residues 1-18 form the signal peptide; that stretch reads MRLGSPGLLFLLFSSLRA. One can recognise an Ig-like V-type domain in the interval 19 to 129; the sequence is DTQEKEVRAM…LGFQEVLSVE (111 aa). Over 19-256 the chain is Extracellular; it reads DTQEKEVRAM…VSTGEKNAAT (238 aa). A disulfide bond links cysteine 37 and cysteine 113. Asparagine 70, asparagine 137, asparagine 173, asparagine 186, and asparagine 225 each carry an N-linked (GlcNAc...) asparagine glycan. Residues 141 to 227 enclose the Ig-like C2-type domain; sequence PVVSAPHSPS…ENVLLQQNLT (87 aa). Cysteines 158 and 216 form a disulfide. A helical membrane pass occupies residues 257–277; it reads WSILAVLCLLVVVAVAIGWVC. Residues 278-302 lie on the Cytoplasmic side of the membrane; sequence RDRCLQHSYAGAWAVSPETELTGHV.

This sequence belongs to the immunoglobulin superfamily. BTN/MOG family. In terms of assembly, interacts with CTLA4 (in vitro). Expressed on peripheral blood B-cells and monocytes, as well as on monocyte-derived dendritic cells (at protein level). In terms of tissue distribution, widely expressed (brain, heart, kidney, liver, lung, pancreas, placenta, skeletal muscle, bone marrow, colon, ovary, prostate, testis, lymph nodes, leukocytes, spleen, thymus and tonsil). As to expression, detected only in lymph nodes, leukocytes and spleen. Expressed on activated monocytes and dendritic cells.

It is found in the cell membrane. In terms of biological role, ligand for the T-cell-specific cell surface receptor ICOS. Acts as a costimulatory signal for T-cell proliferation and cytokine secretion. Also induces B-cell proliferation and differentiation into plasma cells. Could play an important role in mediating local tissue responses to inflammatory conditions, as well as in modulating the secondary immune response by co-stimulating memory T-cell function. In endothelial cells, required for proper neutrophil transmigration in response to chemoattractants, such as CXCL8/IL8 or N-formyl-methionyl peptides (fMLP). The protein is ICOS ligand (ICOSLG) of Homo sapiens (Human).